The sequence spans 310 residues: Olfactory receptor 2A4 (310 aa).

The Extracellular segment spans residues 1–24; that stretch reads MGDNITSIREFLLLGFPVGPRIQM. N-linked (GlcNAc...) asparagine glycosylation occurs at asparagine 4. A helical membrane pass occupies residues 25-48; it reads LLFGLFSLFYVFTLLGNGTILGLI. Topologically, residues 49-56 are cytoplasmic; it reads SLDSRLHA. Residues 57-78 form a helical membrane-spanning segment; that stretch reads PMYFFLSHLAVVDIAYACNTVP. Over 79 to 99 the chain is Extracellular; sequence RMLVNLLHPAKPISFAGRMMQ. Residues 100-119 traverse the membrane as a helical segment; that stretch reads TFLFSTFAVTECLLLVVMSY. Over 120 to 138 the chain is Cytoplasmic; it reads DLYVAICHPLRYLAIMTWR. A helical membrane pass occupies residues 139-157; it reads VCITLAVTSWTTGVLLSLI. Topologically, residues 158–194 are extracellular; sequence HLVLLLPLPFCRPQKIYHFFCEILAVLKLACADTHIN. A helical transmembrane segment spans residues 195 to 218; sequence ENMVLAGAISGLVGPLSTIVVSYM. The Cytoplasmic portion of the chain corresponds to 219–235; the sequence is CILCAILQIQSREVQRK. Residues 236-258 form a helical membrane-spanning segment; the sequence is AFRTCFSHLCVIGLVYGTAIIMY. At 259 to 271 the chain is on the extracellular side; sequence VGPRYGNPKEQKK. Residues 272–291 form a helical membrane-spanning segment; it reads YLLLFHSLFNPMLNPLICSL. At 292 to 310 the chain is on the cytoplasmic side; the sequence is RNSEVKNTLKRVLGVERAL.

This sequence belongs to the G-protein coupled receptor 1 family.

The protein resides in the cell membrane. In terms of biological role, odorant receptor. This is Olfactory receptor 2A4 (OR2A4) from Homo sapiens (Human).